The sequence spans 530 residues: UDP-glucuronosyltransferase 2B17 (530 aa).

Positions 1 to 23 (MSLKWMSVFLLMQLSCYFSSGSC) are cleaved as a signal peptide. N-linked (GlcNAc...) asparagine glycosylation is present at Asn65. Lys136 is subject to N6-succinyllysine. Residues Asn316 and Asn483 are each glycosylated (N-linked (GlcNAc...) asparagine). Residues 495–515 (IAFLLACVATMIFMITKCCLF) form a helical membrane-spanning segment.

It belongs to the UDP-glycosyltransferase family. Expressed in various tissues including the liver, kidney, testis, uterus, placenta, mammary gland, adrenal gland, skin and prostate.

Its subcellular location is the endoplasmic reticulum membrane. The enzyme catalyses glucuronate acceptor + UDP-alpha-D-glucuronate = acceptor beta-D-glucuronoside + UDP + H(+). It carries out the reaction 17alpha-estradiol + UDP-alpha-D-glucuronate = 17alpha-estradiol 3-O-(beta-D-glucuronate) + UDP + H(+). It catalyses the reaction 17alpha-estradiol + UDP-alpha-D-glucuronate = 17alpha-estradiol 17-O-(beta-D-glucuronate) + UDP + H(+). The catalysed reaction is 17beta-estradiol + UDP-alpha-D-glucuronate = 17beta-estradiol 17-O-(beta-D-glucuronate) + UDP + H(+). The enzyme catalyses 17beta-hydroxy-5alpha-androstan-3-one + UDP-alpha-D-glucuronate = 5alpha-dihydrotestosterone 17-O-(beta-D-glucuronate) + UDP + H(+). It carries out the reaction testosterone + UDP-alpha-D-glucuronate = testosterone 17-O-(beta-D-glucuronate) + UDP + H(+). In terms of biological role, UDP-glucuronosyltransferase (UGT) that catalyzes phase II biotransformation reactions in which lipophilic substrates are conjugated with glucuronic acid to increase the metabolite's water solubility, thereby facilitating excretion into either the urine or bile. Catalyzes the glucuronidation of endogenous steroid hormones such as androgens (epitestosterone, androsterone) and estrogens (estradiol, epiestradiol). The protein is UDP-glucuronosyltransferase 2B17 of Homo sapiens (Human).